Consider the following 135-residue polypeptide: MAEKFDNLEDHLEKFVENIRQLGIIVSDFQPSSQAGLNQKLNFLVRGLQDIDKCRQQLHDITVPLEVFDYIDQGRNPQLYTKECLERALAKNEQVKGKIDTLKKFKSLLIQELSKVFPEDMAKYKAVRGEDHPPS.

It belongs to the Mediator complex subunit 10 family. In terms of assembly, component of the Mediator complex.

It localises to the nucleus. Component of the Mediator complex, a coactivator involved in the regulated transcription of nearly all RNA polymerase II-dependent genes. Mediator functions as a bridge to convey information from gene-specific regulatory proteins to the basal RNA polymerase II transcription machinery. Mediator is recruited to promoters by direct interactions with regulatory proteins and serves as a scaffold for the assembly of a functional preinitiation complex with RNA polymerase II and the general transcription factors. In Xenopus laevis (African clawed frog), this protein is Mediator of RNA polymerase II transcription subunit 10 (med10).